A 434-amino-acid chain; its full sequence is Asparagine--tRNA ligase (434 aa).

Belongs to the class-II aminoacyl-tRNA synthetase family.

Its subcellular location is the cytoplasm. It carries out the reaction tRNA(Asn) + L-asparagine + ATP = L-asparaginyl-tRNA(Asn) + AMP + diphosphate + H(+). The sequence is that of Asparagine--tRNA ligase (asnS) from Pyrococcus furiosus (strain ATCC 43587 / DSM 3638 / JCM 8422 / Vc1).